Here is a 396-residue protein sequence, read N- to C-terminus: 1-deoxy-D-xylulose 5-phosphate reductoisomerase (396 aa).

NADPH contacts are provided by threonine 13, glycine 14, serine 15, isoleucine 16, and asparagine 127. Lysine 128 is a binding site for 1-deoxy-D-xylulose 5-phosphate. Glutamate 129 contacts NADPH. Aspartate 153 provides a ligand contact to Mn(2+). Serine 154, glutamate 155, serine 184, and histidine 207 together coordinate 1-deoxy-D-xylulose 5-phosphate. Residue glutamate 155 participates in Mn(2+) binding. Residue glycine 213 participates in NADPH binding. 4 residues coordinate 1-deoxy-D-xylulose 5-phosphate: serine 220, asparagine 225, lysine 226, and glutamate 229. Residue glutamate 229 coordinates Mn(2+).

The protein belongs to the DXR family. Mg(2+) is required as a cofactor. Mn(2+) serves as cofactor.

It carries out the reaction 2-C-methyl-D-erythritol 4-phosphate + NADP(+) = 1-deoxy-D-xylulose 5-phosphate + NADPH + H(+). The protein operates within isoprenoid biosynthesis; isopentenyl diphosphate biosynthesis via DXP pathway; isopentenyl diphosphate from 1-deoxy-D-xylulose 5-phosphate: step 1/6. Inhibited by fosmidomycin and 3-(N-acetyl-N-hydroxyamino)-propylphosphonic acid (FR-900098). Its function is as follows. Catalyzes the NADPH-dependent rearrangement and reduction of 1-deoxy-D-xylulose-5-phosphate (DXP) to 2-C-methyl-D-erythritol 4-phosphate (MEP). The chain is 1-deoxy-D-xylulose 5-phosphate reductoisomerase from Pseudomonas aeruginosa (strain ATCC 15692 / DSM 22644 / CIP 104116 / JCM 14847 / LMG 12228 / 1C / PRS 101 / PAO1).